We begin with the raw amino-acid sequence, 293 residues long: Shikimate dehydrogenase (NADP(+)) (293 aa).

Shikimate is bound by residues Ser-20–Thr-22 and Thr-72. Residue Lys-76 is the Proton acceptor of the active site. Positions 97 and 112 each coordinate shikimate. NADP(+) contacts are provided by residues Gly-136–Ala-140 and Ile-230. Tyr-232 is a shikimate binding site. NADP(+) is bound at residue Gly-253.

Belongs to the shikimate dehydrogenase family. Homodimer.

The enzyme catalyses shikimate + NADP(+) = 3-dehydroshikimate + NADPH + H(+). It participates in metabolic intermediate biosynthesis; chorismate biosynthesis; chorismate from D-erythrose 4-phosphate and phosphoenolpyruvate: step 4/7. Its function is as follows. Involved in the biosynthesis of the chorismate, which leads to the biosynthesis of aromatic amino acids. Catalyzes the reversible NADPH linked reduction of 3-dehydroshikimate (DHSA) to yield shikimate (SA). The polypeptide is Shikimate dehydrogenase (NADP(+)) (Arthrobacter sp. (strain FB24)).